Consider the following 334-residue polypeptide: Protein-methionine-sulfoxide reductase catalytic subunit MsrP (334 aa).

Positions 1 to 44 form a signal peptide, tat-type signal; the sequence is MKKNQFLKESDVTAESVFFMKRRQVLKALGISATALSLPHAAHA. Residues Asn88, 91–92, Cys146, Thr181, Asn233, Arg238, and 249–251 each bind Mo-molybdopterin; these read YE and GIK.

The protein belongs to the MsrP family. As to quaternary structure, heterodimer of a catalytic subunit (MsrP) and a heme-binding subunit (MsrQ). Requires Mo-molybdopterin as cofactor. Exported by the Tat system. Can also be exported by the Sec system.

The protein localises to the periplasm. The catalysed reaction is L-methionyl-[protein] + a quinone + H2O = L-methionyl-(S)-S-oxide-[protein] + a quinol. It carries out the reaction L-methionyl-[protein] + a quinone + H2O = L-methionyl-(R)-S-oxide-[protein] + a quinol. In terms of biological role, part of the MsrPQ system that repairs oxidized periplasmic proteins containing methionine sulfoxide residues (Met-O), using respiratory chain electrons. Thus protects these proteins from oxidative-stress damage caused by reactive species of oxygen and chlorine. MsrPQ is essential for the maintenance of envelope integrity under bleach stress, rescuing a wide series of structurally unrelated periplasmic proteins from methionine oxidation, including the primary periplasmic chaperone SurA and the lipoprotein Pal. The catalytic subunit MsrP is non-stereospecific, being able to reduce both (R-) and (S-) diastereoisomers of methionine sulfoxide. Can catalyze the reduction of a variety of substrates in vitro, including dimethyl sulfoxide, trimethylamine N-oxide, phenylmethyl sulfoxide and L-methionine sulfoxide. Cannot reduce cyclic N-oxides. Shows no activity as sulfite oxidase. This is Protein-methionine-sulfoxide reductase catalytic subunit MsrP from Escherichia coli (strain K12).